The chain runs to 679 residues: Protein hook (679 aa).

The 119-residue stretch at 5 to 123 (NGMYYSLLEW…RLLQLVLGCA (119 aa)) folds into the Calponin-homology (CH) domain. The stretch at 140–627 (EEELQANIMR…SKTKMSTMEE (488 aa)) forms a coiled coil.

It belongs to the hook family. In terms of assembly, homodimer. Interacts with microtubules via its N-terminus.

The protein localises to the cytoplasm. It localises to the cytoskeleton. The protein resides in the endosome. Its subcellular location is the synapse. In terms of biological role, involved in endocytic trafficking by stabilizing organelles of the endocytic pathway. Probably acts as a cytoskeletal linker protein required to tether endosome vesicles to the cytoskeleton. Involved in modulation of endocytosis at stages required for down-regulation of membrane proteins that control synapse size. Not involved in synaptic vesicle recycling. Required in R7 cells for boss endocytosis into multivesicular bodies (MVBs). Has a role in regulating adult longevity. The polypeptide is Protein hook (Drosophila mojavensis (Fruit fly)).